The following is a 975-amino-acid chain: NLR family member X1 (975 aa).

A mitochondrion-targeting transit peptide spans 1 to 86 (MRWGHHLPRA…EAIQRHRRNL (86 aa)). The segment at 75–556 (ATEAIQRHRR…RALPLLFNLI (482 aa)) is required for interaction with MAVS. The region spanning 160-483 (QTVVLYGTVG…LRFFLAPCVE (324 aa)) is the NACHT domain. Residue 166 to 173 (GTVGTGKS) coordinates ATP. The segment at 556 to 974 (IKVVPRVFGR…ALLEQLGSSG (419 aa)) is required for the repression of MAVS-induced interferon signaling. The LRRNT domain maps to 667 to 694 (RQVLPPSELLDHLFFHYEFQNQRFSAEV). LRR repeat units follow at residues 695-718 (LSSL…VVAA), 724-747 (RHAL…TLLP), 749-777 (FLRA…LLHD), 778-801 (QCQI…VLME), 811-834 (HLSL…LDRN), 835-857 (RQLQ…ALAR), 858-877 (AARE…ELSS), and 878-899 (EGRQ…VVVS). In terms of domain architecture, LRRCT spans 906 to 970 (VSEYWSVILS…GEVRALLEQL (65 aa)).

This sequence belongs to the NLRP family. In terms of assembly, homohexamer. Interacts with MAVS. Interacts with TUFM. As to quaternary structure, (Microbial infection) Interacts with influenza A virus protein PB1-F2. In terms of tissue distribution, ubiquitously expressed. Strongest expression in mammary gland, heart and muscle. Detected in HeLa, HEK293T, THP-1, HL-60, Raji and Jurkat cell lines (at protein level).

The protein localises to the mitochondrion outer membrane. Its function is as follows. Participates in antiviral signaling. Acts as a negative regulator of MAVS-mediated antiviral responses, through the inhibition of the virus-induced RLH (RIG-like helicase)-MAVS interaction. Instead, promotes autophagy by interacting with TUFM and subsequently recruiting the autophagy-related proteins ATG5 and ATG12. Also regulates MAVS-dependent NLRP3 inflammasome activation to attenuate apoptosis. Has no inhibitory function on NF-kappa-B signaling pathway, but enhances NF-kappa-B and JUN N-terminal kinase dependent signaling through the production of reactive oxygen species. Regulates viral mediated-inflammation and energy metabolism in a sex-dependent manner. In females, prevents uncontrolled inflammation and energy metabolism and thus, may contribute to the sex differences observed in infectious and inflammatory diseases. This Homo sapiens (Human) protein is NLR family member X1 (NLRX1).